The sequence spans 771 residues: UPF0313 protein PSPTO_4928 (771 aa).

One can recognise a Radical SAM core domain in the interval 371-649; it reads AYDMIRFSVN…KAFLRYHDPK (279 aa). Residues C385, C389, and C392 each contribute to the [4Fe-4S] cluster site. The segment at 683–771 is disordered; that stretch reads DTYQSARRKN…KPARKPVVPR (89 aa). Basic and acidic residues-rich tracts occupy residues 726–735 and 745–754; these read KPWDKREEAK and AAKERMDAAK. The segment covering 756–765 has biased composition (basic residues); the sequence is GKGKGGKPAR.

The protein belongs to the UPF0313 family. The cofactor is [4Fe-4S] cluster.

The polypeptide is UPF0313 protein PSPTO_4928 (Pseudomonas syringae pv. tomato (strain ATCC BAA-871 / DC3000)).